The chain runs to 339 residues: MFYKIAQKVMFQMDPEKAHHLAIASLKATANTPLDCFYAQKFTQAPVEFMGVTFPNPVGLAAGMDKDGECIDGFHAMGFGHIEVGTVTPRPQPGNDLPRLFRLKPAKAIINRMGFNNKGVDNLVANLKAAKSGALVGVNIGKNKDTPVEQGKDDYLICMEKVYEYSAYIAVNISSPNTPGLRSLQYGDLLDDLLGSLKAKQKDLAEKHGKYVPIALKIAPDLSSEEIEKIADSLIRNQFDGAIATNTTLSRDGVSGLMNSNEAGGLSGKPLNSLSTAVIKQLSDCLKGEIPIIGVGGINTASDALDKLDAGAQMVQIYSGFIYQGPKLIQDIVEAYRAR.

FMN-binding positions include 62 to 66 and Thr86; that span reads AGMDK. Lys66 is a binding site for substrate. Substrate is bound at residue 111-115; it reads NRMGF. FMN is bound by residues Asn139 and Asn172. Asn172 contributes to the substrate binding site. The active-site Nucleophile is Ser175. Residue Asn177 participates in substrate binding. FMN contacts are provided by Lys217 and Thr245. 246-247 lines the substrate pocket; sequence NT. Residues Gly268, Gly297, and 318 to 319 each bind FMN; that span reads YS.

This sequence belongs to the dihydroorotate dehydrogenase family. Type 2 subfamily. Monomer. FMN is required as a cofactor.

It is found in the cell membrane. It carries out the reaction (S)-dihydroorotate + a quinone = orotate + a quinol. The protein operates within pyrimidine metabolism; UMP biosynthesis via de novo pathway; orotate from (S)-dihydroorotate (quinone route): step 1/1. In terms of biological role, catalyzes the conversion of dihydroorotate to orotate with quinone as electron acceptor. The polypeptide is Dihydroorotate dehydrogenase (quinone) (Shewanella sediminis (strain HAW-EB3)).